Reading from the N-terminus, the 406-residue chain is Vitamin D3 dihydroxylase (406 aa).

The span at 1–15 (MTDTATTPQTTDAPA) shows a compositional bias: low complexity. The segment at 1–24 (MTDTATTPQTTDAPAFPSNRSCPY) is disordered. Thr-81 contributes to the calciol binding site. The heme site is built by His-103 and Arg-107. Residues Arg-193, Ser-236, and Ile-293 each contribute to the calciol site. Heme is bound by residues Arg-297, His-353, and Cys-355.

This sequence belongs to the cytochrome P450 family. Requires heme as cofactor.

The protein localises to the cytoplasm. The enzyme catalyses calciol + 2 reduced [2Fe-2S]-[ferredoxin] + O2 + 2 H(+) = calcidiol + 2 oxidized [2Fe-2S]-[ferredoxin] + H2O. It carries out the reaction calcidiol + 2 reduced [2Fe-2S]-[ferredoxin] + O2 + 2 H(+) = calcitriol + 2 oxidized [2Fe-2S]-[ferredoxin] + H2O. Functionally, involved in the metabolism of vitamin D3 (calciol) and of a number of sulfonylurea herbicides. Catalyzes the two-step hydroxylation (25- and 1-alpha-hydroxylation) of vitamin D3 (VD3) to yield its active form 1-alpha,25-dihydroxyvitamin D3 (calcitriol). The first step is the hydroxylation of the C-25 position of VD3 to produce 25-hydroxyvitamin D3 (calcidiol). The second reaction is the hydroxylation of the C1-alpha-position of calcidiol to produce calcitriol. It can also hydroxylate vitamin D2. In Streptomyces griseolus, this protein is Vitamin D3 dihydroxylase.